Consider the following 204-residue polypeptide: UPF0637 protein Lm4b_01081 (204 aa).

This sequence belongs to the UPF0637 family.

This Listeria monocytogenes serotype 4b (strain CLIP80459) protein is UPF0637 protein Lm4b_01081.